The primary structure comprises 64 residues: Large ribosomal subunit protein bL33 (64 aa).

It belongs to the bacterial ribosomal protein bL33 family.

The sequence is that of Large ribosomal subunit protein bL33 from Nostoc sp. (strain PCC 7120 / SAG 25.82 / UTEX 2576).